Consider the following 979-residue polypeptide: MRGARGAWDFLCVLLLLLLLGVQTGSSQPSVSPGEPSLPSIHPAKSELIVSVGDELRLSCTDPGFVKWTFETLGQLNENTHNEWITEKAEAGHTGNYTCTNRDGLSRSIYVFVRDPAKLFLVDLPLYGKEGNDTLVRCPLTDPEVTNYSLRGCEGKPLPKDLTFVADPKAGITIRNVKREYHRLCLHCSADQKGRTVLSKKFTLKVRAAIRAVPVVSVSKTSSLLKEGEAFSVMCFIKDVSSFVDSMWIKENSQQTNAQTQSNSWHHGDFNFERQEKLIISSARVNDSGVFMCYANNTFGSANVTTTLEVVDKGFINIFPMMSTTIFVNDGENVDLIVEYEAYPKPEHQQWIYMNRTFTDKWEDYPKSDNESNIRYVSELHLTRLKGNEGGTYTFQVSNSDVNSSVTFNVYVNTKPEILTHESLTNGMLQCVVAGFPEPAVDWYFCPGAEQRCSVPIGPMDVQMQNSSLSPSGKLVVQSSIDYSAFKHNGTVECRAYNNVGRSSAFFNFAFKGNSKEQIHPHTLFTPLLIGFVIAAGMMCIIVMILTYKYLQKPMYEVQWKVVEEINGNNYVYIDPTQLPYDHKWEFPRNRLSFGKTLGAGAFGKVVEATAYGLIKSDAAMTVAVKMLKPSAHLTEREALMSELKVLSYLGNHMNIVNLLGACTVGGPTLVITEYCCYGDLLNFLRRKRDSFICSKQEDHGEVALYKNLLHSKESSCSDSTNEYMDMKPGVSYVVPTKADKRRSARIGSYIERDVTPAIMEDDELALDLEDLLSFSYQVAKGMAFLASKNCIHRDLAARNILLTHGRITKICDFGLARDIKNDSNYVVKGNARLPVKWMAPESIFNCVYTFESDVWSYGIFLWELFSLGSSPYPGMPVDSKFYKMIKEGFRMLSPEHAPAEMYDIMKTCWDADPLKRPTFKQIVQLIEKQISDSTNHIYSNLANCSPNPERPVVDHSVRINSVGSSASSTQPLLVHEDV.

Residues 1–27 (MRGARGAWDFLCVLLLLLLLGVQTGSS) form the signal peptide. Residues 28–527 (QPSVSPGEPS…QIHPHTLFTP (500 aa)) are Extracellular-facing. 5 consecutive Ig-like C2-type domains span residues 29–114 (PSVS…VFVR), 123–207 (DLPL…LKVR), 214–311 (PVVS…LEVV), 320–413 (PMMS…VYVN), and 416–510 (PEIL…FNFA). Cysteines 60 and 99 form a disulfide. 3 N-linked (GlcNAc...) asparagine glycosylation sites follow: N96, N132, and N147. 3 disulfide bridges follow: C138–C188, C153–C185, and C235–C293. Residues N286, N296, N303, N355, N370, N403, N466, and N489 are each glycosylated (N-linked (GlcNAc...) asparagine). C431 and C494 are joined by a disulfide. A helical membrane pass occupies residues 528–548 (LLIGFVIAAGMMCIIVMILTY). At 549-979 (KYLQKPMYEV…TQPLLVHEDV (431 aa)) the chain is on the cytoplasmic side. Phosphotyrosine; by autocatalysis occurs at positions 550, 556, 571, and 573. Y571 contacts Mg(2+). The important for interaction with phosphotyrosine-binding proteins stretch occupies residues 571–573 (YVY). A Protein kinase domain is found at 592 to 940 (LSFGKTLGAG…ISDSTNHIYS (349 aa)). Residues 599–606 (GAGAFGKV), K626, and 674–680 (EYCCYGD) each bind ATP. Y706, Y724, and Y733 each carry phosphotyrosine; by autocatalysis. S744 and S749 each carry phosphoserine; by PKC/PRKCA. D795 serves as the catalytic Proton acceptor. R799 is a binding site for ATP. The Mg(2+) site is built by N800 and D813. Position 824 is a phosphoserine (S824). Residue Y826 is modified to Phosphotyrosine; by autocatalysis. At S894 the chain carries Phosphoserine. Phosphotyrosine; by autocatalysis is present on residues Y903 and Y939. S962 carries the post-translational modification Phosphoserine.

The protein belongs to the protein kinase superfamily. Tyr protein kinase family. CSF-1/PDGF receptor subfamily. As to quaternary structure, monomer in the absence of bound KITLG/SCF. Homodimer in the presence of bound KITLG/SCF, forming a heterotetramer with two KITLG/SCF molecules. Interacts (via phosphorylated tyrosine residues) with the adapter proteins GRB2 and GRB7 (via SH2 domain), and SH2B2/APS. Interacts (via C-terminus) with MPDZ (via the tenth PDZ domain). Interacts (via phosphorylated tyrosine residues) with PIK3R1 and PIK3 catalytic subunit. Interacts (via phosphorylated tyrosine) with CRK (isoform Crk-II), FYN, SHC1 and MATK/CHK (via SH2 domain). Interacts with LYN and FES/FPS. Interacts (via phosphorylated tyrosine residues) with the protein phosphatases PTPN6/SHP-1 (via SH2 domain), PTPN11/SHP-2 (via SH2 domain) and PTPRU. Interacts with PLCG1. Interacts with DOK1 and TEC. Interacts with IL1RAP (independent of stimulation with KITLG/SCF). A mast cell-specific KITLG/SCF-induced interleukin-33 signaling complex contains IL1RL1, IL1RAP, KIT and MYD88. Post-translationally, ubiquitinated by SOCS6. KIT is rapidly ubiquitinated after autophosphorylation induced by KITLG/SCF binding, leading to internalization and degradation. In terms of processing, autophosphorylated on tyrosine residues. KITLG/SCF binding promotes autophosphorylation. Phosphorylated tyrosine residues are important for interaction with specific binding partners.

It localises to the cell membrane. It catalyses the reaction L-tyrosyl-[protein] + ATP = O-phospho-L-tyrosyl-[protein] + ADP + H(+). Its activity is regulated as follows. Present in an inactive conformation in the absence of bound ligand. KITLG/SCF binding leads to dimerization and activation by autophosphorylation on tyrosine residues. Activity is down-regulated by PRKCA-mediated phosphorylation on serine residues. In terms of biological role, tyrosine-protein kinase that acts as a cell-surface receptor for the cytokine KITLG/SCF and plays an essential role in the regulation of cell survival and proliferation, hematopoiesis, stem cell maintenance, gametogenesis, mast cell development, migration and function, and in melanogenesis. In response to KITLG/SCF binding, KIT can activate several signaling pathways. Phosphorylates PIK3R1, PLCG1, SH2B2/APS and CBL. Activates the AKT1 signaling pathway by phosphorylation of PIK3R1, the regulatory subunit of phosphatidylinositol 3-kinase. Activated KIT also transmits signals via GRB2 and activation of RAS, RAF1 and the MAP kinases MAPK1/ERK2 and/or MAPK3/ERK1. Promotes activation of STAT family members STAT1, STAT3, STAT5A and STAT5B. Activation of PLCG1 leads to the production of the cellular signaling molecules diacylglycerol and inositol 1,4,5-trisphosphate. KIT signaling is modulated by protein phosphatases, and by rapid internalization and degradation of the receptor. Activated KIT promotes phosphorylation of the protein phosphatases PTPN6/SHP-1 and PTPRU, and of the transcription factors STAT1, STAT3, STAT5A and STAT5B. Promotes phosphorylation of PIK3R1, CBL, CRK (isoform Crk-II), LYN, MAPK1/ERK2 and/or MAPK3/ERK1, PLCG1, SRC and SHC1. The sequence is that of Mast/stem cell growth factor receptor Kit (KIT) from Canis lupus familiaris (Dog).